We begin with the raw amino-acid sequence, 494 residues long: Alpha-amylase-related protein (494 aa).

A signal peptide spans 1–20 (MIKFALALTLCLAGASLSLA). Gln21 is modified (pyrrolidone carboxylic acid). Residues Cys48 and Cys104 are joined by a disulfide bond. Ca(2+)-binding residues include Asn118, Gln169, and Asp178. An intrachain disulfide couples Cys157 to Cys171. Residue Arg206 coordinates chloride. The active-site Nucleophile is Asp208. His212 lines the Ca(2+) pocket. Glu245 serves as the catalytic Proton donor. Chloride contacts are provided by Asn308 and Arg343. Intrachain disulfides connect Cys376/Cys382, Cys418/Cys441, and Cys448/Cys460.

It belongs to the glycosyl hydrolase 13 family. Monomer. Ca(2+) is required as a cofactor. Requires chloride as cofactor.

The protein localises to the secreted. It catalyses the reaction Endohydrolysis of (1-&gt;4)-alpha-D-glucosidic linkages in polysaccharides containing three or more (1-&gt;4)-alpha-linked D-glucose units.. The protein is Alpha-amylase-related protein (Amyrel) of Drosophila jambulina (Fruit fly).